A 373-amino-acid chain; its full sequence is tRNA-specific 2-thiouridylase MnmA (373 aa).

ATP-binding positions include alanine 18–serine 25 and leucine 44. Catalysis depends on cysteine 117, which acts as the Nucleophile. An intrachain disulfide couples cysteine 117 to cysteine 214. ATP is bound at residue glycine 141. The interval arginine 163–glutamine 165 is interaction with tRNA. The active-site Cysteine persulfide intermediate is the cysteine 214.

Belongs to the MnmA/TRMU family.

The protein resides in the cytoplasm. The catalysed reaction is S-sulfanyl-L-cysteinyl-[protein] + uridine(34) in tRNA + AH2 + ATP = 2-thiouridine(34) in tRNA + L-cysteinyl-[protein] + A + AMP + diphosphate + H(+). Its function is as follows. Catalyzes the 2-thiolation of uridine at the wobble position (U34) of tRNA, leading to the formation of s(2)U34. In Paramagnetospirillum magneticum (strain ATCC 700264 / AMB-1) (Magnetospirillum magneticum), this protein is tRNA-specific 2-thiouridylase MnmA.